Reading from the N-terminus, the 216-residue chain is Large ribosomal subunit protein uL3 (216 aa).

Residues 134-153 are disordered; that stretch reads RATHGNSRSHNVPGSIGMAQ. Gln153 is subject to N5-methylglutamine.

The protein belongs to the universal ribosomal protein uL3 family. Part of the 50S ribosomal subunit. Forms a cluster with proteins L14 and L19. Methylated by PrmB.

Its function is as follows. One of the primary rRNA binding proteins, it binds directly near the 3'-end of the 23S rRNA, where it nucleates assembly of the 50S subunit. This is Large ribosomal subunit protein uL3 from Cupriavidus taiwanensis (strain DSM 17343 / BCRC 17206 / CCUG 44338 / CIP 107171 / LMG 19424 / R1) (Ralstonia taiwanensis (strain LMG 19424)).